Consider the following 341-residue polypeptide: Phenazine O-methyltransferase PhzM (341 aa).

S-adenosyl-L-methionine-binding positions include D205 and 231–233 (GDF). The active-site Proton acceptor is the H251.

It belongs to the class I-like SAM-binding methyltransferase superfamily. Cation-independent O-methyltransferase family. In terms of assembly, homodimer.

It catalyses the reaction 1,6-dihydroxyphenazine + S-adenosyl-L-methionine = 1-hydroxy-6-methoxyphenazine + S-adenosyl-L-homocysteine + H(+). The catalysed reaction is 1-hydroxy-6-methoxyphenazine + S-adenosyl-L-methionine = 1,6-dimethoxyphenazine + S-adenosyl-L-homocysteine + H(+). It carries out the reaction 1-hydroxy-6-methoxyphenazine N(10)-oxide + S-adenosyl-L-methionine = 1,6-dimethoxyphenazine N(5)-oxide + S-adenosyl-L-homocysteine. The enzyme catalyses 1,6-dihydroxyphenazine N(5),N(10)-dioxide + S-adenosyl-L-methionine = 1-hydroxy-6-methoxyphenazine N(5),N(10)-dioxide + S-adenosyl-L-homocysteine. It catalyses the reaction 1-hydroxy-6-methoxyphenazine N(5),N(10)-dioxide + S-adenosyl-L-methionine = 1,6-dimethoxyphenazine N(5),N(10)-dioxide + S-adenosyl-L-homocysteine. Involved in the biosynthesis of phenazine natural products including myxin, an N(5),N(10)-dioxide phenazine antiobiotic, which has antimicrobial activity. O-methyltransferase, which converts iodinin (1,6-dihydroxyphenazine N(5),N(10)-dioxide) to myxin (1-hydroxy-6-methoxyphenazine N(5),N(10)-dioxide). Catalyzes both monomethoxy and dimethoxy formation of phenazine natural compounds. Acts on a wide variety of substrates, catalyzing O-methylation of phenazines with non-, mono- or di-N-oxide. Highest activity with 1,6-dihydroxyphenazine (DHP) as substrate. Less active with monohydroxy-containing and monohydroxy-monomethoxy-containing phenazines. Least active with non-phenazine substrates, such as 8-hydroxyquinoline and 6-hydroxyquinoline. Is not able to convert 1-hydroxyphenazine to 1-hydroxy-N5-methylphenazine (pyocyanine), hence does not function as an N-methyltransferase. In Lysobacter antibioticus, this protein is Phenazine O-methyltransferase PhzM.